The primary structure comprises 133 residues: Mediator of RNA polymerase II transcription subunit 10 (133 aa).

Over residues 1-13 (MSTEASTGETPEF) the composition is skewed to polar residues. Residues 1-28 (MSTEASTGETPEFQSYDHRGSPTQEAMK) are disordered. Over residues 15–28 (SYDHRGSPTQEAMK) the composition is skewed to basic and acidic residues.

The protein belongs to the Mediator complex subunit 10 family. Component of the Mediator complex.

It localises to the nucleus. In terms of biological role, component of the Mediator complex, a coactivator involved in the regulated transcription of nearly all RNA polymerase II-dependent genes. Mediator functions as a bridge to convey information from gene-specific regulatory proteins to the basal RNA polymerase II transcription machinery. Mediator is recruited to promoters by direct interactions with regulatory proteins and serves as a scaffold for the assembly of a functional preinitiation complex with RNA polymerase II and the general transcription factors. In Phaeosphaeria nodorum (strain SN15 / ATCC MYA-4574 / FGSC 10173) (Glume blotch fungus), this protein is Mediator of RNA polymerase II transcription subunit 10 (NUT2).